A 790-amino-acid chain; its full sequence is Type VI secretion system spike protein VgrG5 (790 aa).

Composition is skewed to basic and acidic residues over residues 753 to 763 (GFRDYRAEMPQ) and 772 to 790 (AYRR…EPTP). Positions 753-790 (GFRDYRAEMPQHKPRSAPDAYRRDASRPGAADKDEPTP) are disordered.

The protein belongs to the VgrG protein family.

Its subcellular location is the secreted. In terms of biological role, part of the H2 type VI secretion system (H2-T6SS) specialized secretion system, which delivers several virulence factors in both prokaryotic and eukaryotic cells during infection. Allows the delivery of the phospholipase effector PldB to target cells where it exerts its toxicity. Also plays a role in VgrG4b and its effector PldA secretion. The protein is Type VI secretion system spike protein VgrG5 of Pseudomonas aeruginosa (strain ATCC 15692 / DSM 22644 / CIP 104116 / JCM 14847 / LMG 12228 / 1C / PRS 101 / PAO1).